The following is a 638-amino-acid chain: DEAD-box ATP-dependent RNA helicase 52B (638 aa).

2 stretches are compositionally biased toward low complexity: residues methionine 1–alanine 21 and glycine 40–proline 67. Residues methionine 1–proline 129 form a disordered region. The span at valine 79–alanine 112 shows a compositional bias: gly residues. Over residues glycine 119–aspartate 128 the composition is skewed to basic and acidic residues. The Q motif signature appears at asparagine 169–arginine 197. In terms of domain architecture, Helicase ATP-binding spans isoleucine 200–leucine 384. Position 213 to 220 (alanine 213 to threonine 220) interacts with ATP. The DEAD box motif lies at aspartate 328–aspartate 331. The Helicase C-terminal domain maps to tyrosine 411–alanine 562. Positions serine 565–aspartate 638 are disordered. The span at phenylalanine 567–phenylalanine 583 shows a compositional bias: gly residues. Basic and acidic residues predominate over residues glycine 584–glycine 593. A compositionally biased stretch (gly residues) spans serine 594 to glycine 632.

Belongs to the DEAD box helicase family. DDX3/DED1 subfamily.

It carries out the reaction ATP + H2O = ADP + phosphate + H(+). The sequence is that of DEAD-box ATP-dependent RNA helicase 52B (PL10B) from Oryza sativa subsp. japonica (Rice).